The chain runs to 664 residues: MACRLYLALIFSCVYLICLSSQQETGFVYNGFEQADLFIDGIAKILPDGLLQLTNTTELQMGHAFFKKPFDFDPSSSLSFYTHFVCALVPPKLGADGGHGIVFVVSPSIDLSHAYATQYLGVFSNLTNGTSSSHLLAIELDTVKTVEFNELEKPHVGIDLNSPISVESALPSYFSNALGKNISINLLSGEPIQVWVDYDGSFLNVTLAPIEIKKPNQPLISRAINLSEIFQEKMYVGFSSSTGNLLSNHYILGWSFSRRKEQLQSLNLSTLPRVPLPKEEKKKLSPLLIGLVILLVIPVVMVLGGVYWYRRKKYAEVKEWWEKEYGPHRFSYKSLYKATNGFRKDCRVGKGGFGEVYKGTLPGGRHIAVKRLSHDAEQGMKQFVAEVVTMGNLQHRNLVPLLGYCRRKCELLLVSEYMPNGSLDQYLFHEGNPSPSWYQRISILKDIASALSYLHTGTKQVVLHRDIKASNVMLDSEFNGRLGDFGMAKFHDRGTNLSATAAVGTIGYMAPELITMGTSMKTDVYAFGAFLLEVICGRRPVEPELPVGKQYLVKWVYECWKEACLFKTRDPRLGVEFLPEEVEMVLKLGLLCTNAMPESRPAMEQVVQYLNQDLPLPIFSPSTPGIGAFMPVSMEALSAIGVSSVRNSSVSMFVTHTILDGHGR.

The first 21 residues, 1–21 (MACRLYLALIFSCVYLICLSS), serve as a signal peptide directing secretion. Topologically, residues 22–286 (QQETGFVYNG…PKEEKKKLSP (265 aa)) are extracellular. A legume-lectin like region spans residues 24 to 257 (ETGFVYNGFE…NHYILGWSFS (234 aa)). 7 N-linked (GlcNAc...) asparagine glycosylation sites follow: Asn-55, Asn-125, Asn-128, Asn-181, Asn-204, Asn-225, and Asn-267. Residues 287 to 307 (LLIGLVILLVIPVVMVLGGVY) form a helical membrane-spanning segment. Topologically, residues 308–664 (WYRRKKYAEV…THTILDGHGR (357 aa)) are cytoplasmic. The Protein kinase domain occupies 342–619 (FRKDCRVGKG…LNQDLPLPIF (278 aa)). Residues 348–356 (VGKGGFGEV) and Lys-370 contribute to the ATP site. The Proton acceptor role is filled by Asp-466.

This sequence in the C-terminal section; belongs to the protein kinase superfamily. Ser/Thr protein kinase family. The protein in the N-terminal section; belongs to the leguminous lectin family. In terms of processing, autophosphorylated on Ser and Thr residues. In terms of tissue distribution, mostly expressed in roots and flowers, and, to a lower extent, in leaves.

It localises to the cell membrane. It carries out the reaction L-seryl-[protein] + ATP = O-phospho-L-seryl-[protein] + ADP + H(+). The enzyme catalyses L-threonyl-[protein] + ATP = O-phospho-L-threonyl-[protein] + ADP + H(+). Functionally, involved in resistance response to the pathogenic fungus Alternaria brassicicola. The chain is L-type lectin-domain containing receptor kinase I.3 from Arabidopsis thaliana (Mouse-ear cress).